Here is a 239-residue protein sequence, read N- to C-terminus: NAD(P)H-quinone oxidoreductase subunit K, chloroplastic (239 aa).

The [4Fe-4S] cluster site is built by Cys-43, Cys-44, Cys-108, and Cys-139. Residues 217-239 (KSSVSSRELGNESGKEDVSIQNK) form a disordered region. Basic and acidic residues predominate over residues 225 to 239 (LGNESGKEDVSIQNK).

Belongs to the complex I 20 kDa subunit family. In terms of assembly, NDH is composed of at least 16 different subunits, 5 of which are encoded in the nucleus. It depends on [4Fe-4S] cluster as a cofactor.

It localises to the plastid. The protein resides in the chloroplast thylakoid membrane. The catalysed reaction is a plastoquinone + NADH + (n+1) H(+)(in) = a plastoquinol + NAD(+) + n H(+)(out). It carries out the reaction a plastoquinone + NADPH + (n+1) H(+)(in) = a plastoquinol + NADP(+) + n H(+)(out). In terms of biological role, NDH shuttles electrons from NAD(P)H:plastoquinone, via FMN and iron-sulfur (Fe-S) centers, to quinones in the photosynthetic chain and possibly in a chloroplast respiratory chain. The immediate electron acceptor for the enzyme in this species is believed to be plastoquinone. Couples the redox reaction to proton translocation, and thus conserves the redox energy in a proton gradient. This is NAD(P)H-quinone oxidoreductase subunit K, chloroplastic from Acorus calamus var. americanus (American sweet flag).